The sequence spans 267 residues: Dihydropteroate synthase (267 aa).

Positions 1–251 (MTKTKIMGIL…NVELNAKLAK (251 aa)) constitute a Pterin-binding domain. Asn-11 provides a ligand contact to Mg(2+). (7,8-dihydropterin-6-yl)methyl diphosphate is bound by residues Thr-51, Asp-84, Asn-103, Asp-167, Lys-203, and 239–241 (RVH).

The protein belongs to the DHPS family. In terms of assembly, homodimer. Mg(2+) serves as cofactor.

The catalysed reaction is (7,8-dihydropterin-6-yl)methyl diphosphate + 4-aminobenzoate = 7,8-dihydropteroate + diphosphate. It functions in the pathway cofactor biosynthesis; tetrahydrofolate biosynthesis; 7,8-dihydrofolate from 2-amino-4-hydroxy-6-hydroxymethyl-7,8-dihydropteridine diphosphate and 4-aminobenzoate: step 1/2. Its function is as follows. Catalyzes the condensation of para-aminobenzoate (pABA) with 6-hydroxymethyl-7,8-dihydropterin diphosphate (DHPt-PP) to form 7,8-dihydropteroate (H2Pte), the immediate precursor of folate derivatives. This chain is Dihydropteroate synthase (folP), found in Staphylococcus aureus (strain MRSA252).